The following is a 425-amino-acid chain: Phosphomethylpyrimidine synthase (425 aa).

Residues M94, Y123, H162, 184 to 186 (SRG), 225 to 228 (NGMR), and E264 each bind substrate. H268 contributes to the Zn(2+) binding site. Y291 provides a ligand contact to substrate. Position 332 (H332) interacts with Zn(2+). Residues C407, C410, and C414 each contribute to the [4Fe-4S] cluster site.

The protein belongs to the ThiC family. [4Fe-4S] cluster is required as a cofactor.

It catalyses the reaction 5-amino-1-(5-phospho-beta-D-ribosyl)imidazole + S-adenosyl-L-methionine = 4-amino-2-methyl-5-(phosphooxymethyl)pyrimidine + CO + 5'-deoxyadenosine + formate + L-methionine + 3 H(+). It functions in the pathway cofactor biosynthesis; thiamine diphosphate biosynthesis. Catalyzes the synthesis of the hydroxymethylpyrimidine phosphate (HMP-P) moiety of thiamine from aminoimidazole ribotide (AIR) in a radical S-adenosyl-L-methionine (SAM)-dependent reaction. This chain is Phosphomethylpyrimidine synthase, found in Methanocorpusculum labreanum (strain ATCC 43576 / DSM 4855 / Z).